Reading from the N-terminus, the 336-residue chain is Protein SphX (336 aa).

The first 27 residues, 1-27 (MFDLSRLSRGIVPMALLLLGISACTPS), serve as a signal peptide directing secretion.

This sequence belongs to the PstS family.

Its function is as follows. May be involved in the system for phosphate transport across the cytoplasmic membrane. The polypeptide is Protein SphX (sphX) (Synechocystis sp. (strain ATCC 27184 / PCC 6803 / Kazusa)).